A 190-amino-acid polypeptide reads, in one-letter code: MTQSSTPAVETDSKTGSSKAISFQDYLDLSKQAFHNQQPLHLLTQRISFQDWARLRAILAPALYVDYTKIGKEKWDAMSADDFMAMVSNDDFLGDPCVKTQHLIGATYWERVSESKVIGHHQLRAAHQVYTSPDLKTVKLRGHSHATNEHYYVKSGGVWKFAGLKPEVRWNEYKFEEVFKGSYTQSEKHS.

Position 67 (Tyr67) interacts with substrate. Active-site residues include His102 and His127. Asn148 serves as a coordination point for substrate.

The protein belongs to the scytalone dehydratase family. In terms of assembly, homotrimer. Each subunit contains an active site, located in the central part of the hydrophobic core of the monomer, which functions independently.

Scytalone dehydratase-like protein; part of the Pks2 gene cluster that mediates the formation of infectious structures (appressoria), enabling these fungi to kill insects faster. The product of the Pks2 gene cluster is different from the one of Pks1 and has still not been identified. The sequence is that of Scytalone dehydratase-like protein Arp1 from Metarhizium anisopliae (strain ARSEF 549).